The following is a 372-amino-acid chain: Tyrosine--tRNA ligase (372 aa).

5 residues coordinate L-tyrosine: tyrosine 37, tyrosine 169, glutamine 173, aspartate 176, and glutamine 191. The 'KMSKS' region motif lies at 246–250 (KMSKS). ATP is bound at residue lysine 249.

It belongs to the class-I aminoacyl-tRNA synthetase family. TyrS type 4 subfamily. Homodimer.

Its subcellular location is the cytoplasm. The catalysed reaction is tRNA(Tyr) + L-tyrosine + ATP = L-tyrosyl-tRNA(Tyr) + AMP + diphosphate + H(+). Its function is as follows. Catalyzes the attachment of tyrosine to tRNA(Tyr) in a two-step reaction: tyrosine is first activated by ATP to form Tyr-AMP and then transferred to the acceptor end of tRNA(Tyr). This is Tyrosine--tRNA ligase from Pyrobaculum arsenaticum (strain DSM 13514 / JCM 11321 / PZ6).